The following is a 210-amino-acid chain: Large ribosomal subunit protein bL25 (210 aa).

A disordered region spans residues 179–210; that stretch reads LPPQQEEEIHSGEQQEPGHPDAEEGRETTPES. Basic and acidic residues predominate over residues 185–210; that stretch reads EEIHSGEQQEPGHPDAEEGRETTPES.

Belongs to the bacterial ribosomal protein bL25 family. CTC subfamily. As to quaternary structure, part of the 50S ribosomal subunit; part of the 5S rRNA/L5/L18/L25 subcomplex. Contacts the 5S rRNA. Binds to the 5S rRNA independently of L5 and L18.

Its function is as follows. This is one of the proteins that binds to the 5S RNA in the ribosome where it forms part of the central protuberance. The polypeptide is Large ribosomal subunit protein bL25 (Geobacillus sp. (strain WCH70)).